Here is a 150-residue protein sequence, read N- to C-terminus: uncharacterized protein (150 aa).

The next 3 helical transmembrane spans lie at 50–70 (VVSV…VIHL), 80–100 (LYIT…QLWL), and 127–147 (KVVI…FFIE).

The protein localises to the membrane. This is an uncharacterized protein from Schizosaccharomyces pombe (strain 972 / ATCC 24843) (Fission yeast).